We begin with the raw amino-acid sequence, 181 residues long: I-Kappa-B like protein C2 (181 aa).

3 ANK repeats span residues 54–86 (DGKX…DINS), 91–121 (DGNT…DMEI), and 125–154 (ARKT…RCDV).

Belongs to the polydnaviridae I-Kappa-B-like protein family.

In terms of biological role, suppresses the host immune response through NF-kappa-B inactivation. Possesses ankyrin repeat domains required for NF-kappa-B binding but lacks the regulatory regions required for dissociation from NF-kappa-B and degradation. Therefore, prevents host NF-kappa-B release and subsequent activation. The sequence is that of I-Kappa-B like protein C2 (C2) from Microplitis demolitor (Parasitoid wasp).